Here is a 908-residue protein sequence, read N- to C-terminus: Translation initiation factor IF-2 (908 aa).

Residues 52-318 form a disordered region; that stretch reads QSHGQEEKRR…RSSQSSQHKF (267 aa). Residues 65–84 show a composition bias toward polar residues; it reads KSKTTSTARVTGSSGKSKSV. Basic and acidic residues-rich tracts occupy residues 94-108, 120-138, 176-185, 193-238, 270-280, and 294-303; these read FEKP…ELAA, AAKD…EERQ, IEVKPKDQPK, PKVE…EQMR, SFEKERREIKR, and KNQDEREIKN. The tr-type G domain occupies 409-578; it reads TRPPVVTIMG…SLQAELMELE (170 aa). The interval 418–425 is G1; it reads GHVDHGKT. 418-425 contacts GTP; the sequence is GHVDHGKT. Residues 443-447 are G2; it reads GITQH. The tract at residues 464 to 467 is G3; that stretch reads DTPG. Residues 464–468 and 518–521 contribute to the GTP site; these read DTPGH and NKMD. The interval 518–521 is G4; it reads NKMD. A G5 region spans residues 554 to 556; that stretch reads SAK.

This sequence belongs to the TRAFAC class translation factor GTPase superfamily. Classic translation factor GTPase family. IF-2 subfamily.

The protein resides in the cytoplasm. One of the essential components for the initiation of protein synthesis. Protects formylmethionyl-tRNA from spontaneous hydrolysis and promotes its binding to the 30S ribosomal subunits. Also involved in the hydrolysis of GTP during the formation of the 70S ribosomal complex. This chain is Translation initiation factor IF-2, found in Psychrobacter cryohalolentis (strain ATCC BAA-1226 / DSM 17306 / VKM B-2378 / K5).